A 405-amino-acid chain; its full sequence is Elongation factor Tu (405 aa).

The region spanning 10–213 is the tr-type G domain; sequence KEHVNVGTIG…AMDEYIPTPE (204 aa). The tract at residues 19 to 26 is G1; sequence GHVDHGKS. 19–26 contacts GTP; the sequence is GHVDHGKS. Residue Ser-26 coordinates Mg(2+). The tract at residues 64 to 68 is G2; the sequence is GITIN. Residues 85–88 form a G3 region; it reads DCPG. Residues 85 to 89 and 140 to 143 each bind GTP; these read DCPGH and NKCD. Residues 140–143 are G4; the sequence is NKCD. The segment at 178–180 is G5; the sequence is SAL.

The protein belongs to the TRAFAC class translation factor GTPase superfamily. Classic translation factor GTPase family. EF-Tu/EF-1A subfamily. In terms of assembly, monomer.

The protein resides in the cytoplasm. The catalysed reaction is GTP + H2O = GDP + phosphate + H(+). GTP hydrolase that promotes the GTP-dependent binding of aminoacyl-tRNA to the A-site of ribosomes during protein biosynthesis. This chain is Elongation factor Tu, found in Aquifex pyrophilus.